The primary structure comprises 971 residues: Xylanolytic transcriptional activator xlnR (971 aa).

Disordered regions lie at residues 1–25 and 55–123; these read MSTT…PVGM and GASA…PVRR. A compositionally biased stretch (low complexity) spans 9–18; sequence FTSSFSPFSS. Polar residues predominate over residues 67–96; it reads LRSSISKPQGQQLYSDESSAQHTQNATTGF. The segment at residues 129-155 is a DNA-binding region (zn(2)-C6 fungal-type); sequence CDQCNQLRTKCDGQNPCAHCIEFGLTC. Polar residues-rich tracts occupy residues 182–199, 227–241, and 249–260; these read NGTA…SVSS, NLAT…QHSD, and QGSQQTPHSQPS. 3 disordered regions span residues 182 to 263, 295 to 316, and 580 to 610; these read NGTA…SLGG, LHPS…GMNS, and RELP…NLPP.

It belongs to the xlnR/xlr1 family.

Its subcellular location is the nucleus. Functionally, transcriptional activator of the xylanolytic system. Involved in the regulation of extracellular cellulolytic and xylanolytic genes and in the regulation of the intracellular activities of D-xylose catabolic genes in the pentose catabolic pathway (PCP) in response to the presence of D-xylose. The polypeptide is Xylanolytic transcriptional activator xlnR (xlnR) (Aspergillus flavus (strain ATCC 200026 / FGSC A1120 / IAM 13836 / NRRL 3357 / JCM 12722 / SRRC 167)).